A 117-amino-acid polypeptide reads, in one-letter code: Appetite-regulating hormone (117 aa).

The first 23 residues, methionine 1–alanine 23, serve as a signal peptide directing secretion. Serine 26 carries O-decanoyl serine; alternate lipidation. The O-hexanoyl serine; alternate moiety is linked to residue serine 26. Serine 26 is lipidated: O-octanoyl serine; alternate. Residues serine 29 to proline 50 form a disordered region. Residues glutamate 31 to lysine 43 show a composition bias toward basic and acidic residues. Residues alanine 52–arginine 75 constitute a propeptide, removed in mature form. The residue at position 98 (leucine 98) is a Leucine amide. Residues glycine 99–lysine 117 constitute a propeptide, removed in mature form.

This sequence belongs to the motilin family. O-octanoylated by GOAT/MBOAT4. O-octanoylation or O-decanoylation is essential for ghrelin activity. The O-decanoylated forms Ghrelin-27-C10 and Ghrelin-28-C10 differ in the length of the carbon backbone of the carboxylic acid bound to Ser-26. A small fraction of ghrelin, ghrelin-28-C10:1, may be modified with a singly unsaturated carboxylic acid. Also O-acetylated and O-butyrylated on Ser-26 to minor levels. Post-translationally, amidation of Leu-98 is essential for obestatin activity. Highest level in stomach. All forms are found in serum as well. Other tissues compensate for the loss of ghrelin synthesis in the stomach following gastrectomy.

Its subcellular location is the secreted. Ghrelin is the ligand for growth hormone secretagogue receptor type 1 (GHSR). Induces the release of growth hormone from the pituitary. Has an appetite-stimulating effect, induces adiposity and stimulates gastric acid secretion. Involved in growth regulation. Functionally, may be the ligand for GPR39. May have an appetite-reducing effect resulting in decreased food intake. May reduce gastric emptying activity and jejunal motility. This chain is Appetite-regulating hormone (GHRL), found in Homo sapiens (Human).